The chain runs to 597 residues: Aspartate--tRNA(Asp/Asn) ligase (597 aa).

E178 contributes to the L-aspartate binding site. The aspartate stretch occupies residues 202–205; that stretch reads QLFK. Residue R224 coordinates L-aspartate. ATP-binding positions include 224–226 and Q233; that span reads RDE. H458 serves as a coordination point for L-aspartate. E488 is an ATP binding site. Residue R495 coordinates L-aspartate. 540–543 provides a ligand contact to ATP; that stretch reads GLDR.

The protein belongs to the class-II aminoacyl-tRNA synthetase family. Type 1 subfamily. In terms of assembly, homodimer.

The protein localises to the cytoplasm. The enzyme catalyses tRNA(Asx) + L-aspartate + ATP = L-aspartyl-tRNA(Asx) + AMP + diphosphate. Its function is as follows. Aspartyl-tRNA synthetase with relaxed tRNA specificity since it is able to aspartylate not only its cognate tRNA(Asp) but also tRNA(Asn). Reaction proceeds in two steps: L-aspartate is first activated by ATP to form Asp-AMP and then transferred to the acceptor end of tRNA(Asp/Asn). This is Aspartate--tRNA(Asp/Asn) ligase from Cyanothece sp. (strain PCC 7425 / ATCC 29141).